The sequence spans 204 residues: Altered inheritance of mitochondria protein 20 (204 aa).

Residues 6–26 (VAVGTAVGIPIAVGVIIALIF) traverse the membrane as a helical segment.

The protein belongs to the SKG1 family.

Its subcellular location is the vacuole membrane. Involved in cell cycle progression and surviving DNA damage. This chain is Altered inheritance of mitochondria protein 20 (AIM20), found in Saccharomyces cerevisiae (strain RM11-1a) (Baker's yeast).